The primary structure comprises 390 residues: Acetylornithine aminotransferase (390 aa).

Residues 105 to 106 and F132 each bind pyridoxal 5'-phosphate; that span reads GA. R135 contacts N(2)-acetyl-L-ornithine. Position 217 to 220 (217 to 220) interacts with pyridoxal 5'-phosphate; sequence DEVQ. K246 carries the post-translational modification N6-(pyridoxal phosphate)lysine. Position 274 (S274) interacts with N(2)-acetyl-L-ornithine. T275 lines the pyridoxal 5'-phosphate pocket.

Belongs to the class-III pyridoxal-phosphate-dependent aminotransferase family. ArgD subfamily. As to quaternary structure, homodimer. Requires pyridoxal 5'-phosphate as cofactor.

It localises to the cytoplasm. The catalysed reaction is N(2)-acetyl-L-ornithine + 2-oxoglutarate = N-acetyl-L-glutamate 5-semialdehyde + L-glutamate. Its pathway is amino-acid biosynthesis; L-arginine biosynthesis; N(2)-acetyl-L-ornithine from L-glutamate: step 4/4. The protein is Acetylornithine aminotransferase of Methanothermobacter thermautotrophicus (strain ATCC 29096 / DSM 1053 / JCM 10044 / NBRC 100330 / Delta H) (Methanobacterium thermoautotrophicum).